Here is a 221-residue protein sequence, read N- to C-terminus: Large ribosomal subunit protein uL16y (221 aa).

The protein belongs to the universal ribosomal protein uL16 family. In terms of assembly, component of the small ribosomal subunit. Mature ribosomes consist of a small (40S) and a large (60S) subunit. The 40S subunit contains about 33 different proteins and 1 molecule of RNA (18S). The 60S subunit contains about 49 different proteins and 3 molecules of RNA (25S, 5.8S and 5S).

The protein is Large ribosomal subunit protein uL16y (RPL10B) of Arabidopsis thaliana (Mouse-ear cress).